The chain runs to 239 residues: Carboxy-S-adenosyl-L-methionine synthase (239 aa).

S-adenosyl-L-methionine is bound by residues Tyr35, 64–66 (GCS), 88–89 (DN), and Arg195.

It belongs to the class I-like SAM-binding methyltransferase superfamily. Cx-SAM synthase family. As to quaternary structure, homodimer.

It carries out the reaction prephenate + S-adenosyl-L-methionine = carboxy-S-adenosyl-L-methionine + 3-phenylpyruvate + H2O. Functionally, catalyzes the conversion of S-adenosyl-L-methionine (SAM) to carboxy-S-adenosyl-L-methionine (Cx-SAM). The sequence is that of Carboxy-S-adenosyl-L-methionine synthase from Helicobacter pylori (strain G27).